A 126-amino-acid polypeptide reads, in one-letter code: C-type natriuretic peptide (126 aa).

An N-terminal signal peptide occupies residues 1 to 23 (MHLSQLLACALLLTLLSLRPSEA). Residues 19–72 (RPSEAKPGAPPKVPRTPPGEEVAEPQAAGGGQKKGDKTPGGGGANLKGDRSRLL) are disordered. Residues 24–73 (KPGAPPKVPRTPPGEEVAEPQAAGGGQKKGDKTPGGGGANLKGDRSRLLR) constitute a propeptide that is removed on maturation. The segment covering 26 to 35 (GAPPKVPRTP) has biased composition (pro residues). Gly residues predominate over residues 46–63 (AGGGQKKGDKTPGGGGAN). An intrachain disulfide couples C110 to C126.

Belongs to the natriuretic peptide family. In terms of processing, degraded by IDE (in vitro).

The protein localises to the secreted. Hormone which plays a role in endochondral ossification through regulation of cartilaginous growth plate chondrocytes proliferation and differentiation. May also be vasoactive and natriuretic. Acts by specifically binding and stimulating NPR2 to produce cGMP. Binds the clearance receptor NPR3. This chain is C-type natriuretic peptide (NPPC), found in Sus scrofa (Pig).